The sequence spans 746 residues: NAD(P)H-quinone oxidoreductase subunit 5, chloroplastic (746 aa).

16 consecutive transmembrane segments (helical) span residues 9-29, 40-60, 89-109, 125-145, 147-167, 185-205, 221-241, 258-278, 280-300, 327-347, 354-374, 396-416, 425-445, 547-567, 608-628, and 723-743; these read WIIP…LLLF, WTFL…YLSI, IDPL…LVLI, FAYM…SNLI, VYFF…FWFT, GDFG…SFEF, VNLL…IAKS, TPIS…FLVA, LLPL…IGII, LGYM…FHLI, ALLF…VGYS, TAFL…CFWS, LLFS…TAFY, ILFP…IGIP, FSVS…KPFY, and YLFL…FFYF.

The protein belongs to the complex I subunit 5 family. NDH is composed of at least 16 different subunits, 5 of which are encoded in the nucleus.

It is found in the plastid. The protein resides in the chloroplast thylakoid membrane. The catalysed reaction is a plastoquinone + NADH + (n+1) H(+)(in) = a plastoquinol + NAD(+) + n H(+)(out). It catalyses the reaction a plastoquinone + NADPH + (n+1) H(+)(in) = a plastoquinol + NADP(+) + n H(+)(out). Functionally, NDH shuttles electrons from NAD(P)H:plastoquinone, via FMN and iron-sulfur (Fe-S) centers, to quinones in the photosynthetic chain and possibly in a chloroplast respiratory chain. The immediate electron acceptor for the enzyme in this species is believed to be plastoquinone. Couples the redox reaction to proton translocation, and thus conserves the redox energy in a proton gradient. The polypeptide is NAD(P)H-quinone oxidoreductase subunit 5, chloroplastic (ndhF) (Arabidopsis thaliana (Mouse-ear cress)).